Reading from the N-terminus, the 421-residue chain is 4-hydroxy-3-methylbut-2-en-1-yl diphosphate synthase (flavodoxin) (421 aa).

[4Fe-4S] cluster is bound by residues Cys298, Cys301, Cys344, and Glu351.

This sequence belongs to the IspG family. [4Fe-4S] cluster serves as cofactor.

It carries out the reaction (2E)-4-hydroxy-3-methylbut-2-enyl diphosphate + oxidized [flavodoxin] + H2O + 2 H(+) = 2-C-methyl-D-erythritol 2,4-cyclic diphosphate + reduced [flavodoxin]. It functions in the pathway isoprenoid biosynthesis; isopentenyl diphosphate biosynthesis via DXP pathway; isopentenyl diphosphate from 1-deoxy-D-xylulose 5-phosphate: step 5/6. Functionally, converts 2C-methyl-D-erythritol 2,4-cyclodiphosphate (ME-2,4cPP) into 1-hydroxy-2-methyl-2-(E)-butenyl 4-diphosphate. The sequence is that of 4-hydroxy-3-methylbut-2-en-1-yl diphosphate synthase (flavodoxin) from Neisseria meningitidis serogroup B (strain ATCC BAA-335 / MC58).